An 858-amino-acid polypeptide reads, in one-letter code: Potassium channel KOR1 (858 aa).

The segment at 1–41 is disordered; sequence MGRGIGSKRRVEDDDGENMPGRKKKEEEEEEEDDDGEEEYE. Residues 1-102 lie on the Cytoplasmic side of the membrane; the sequence is MGRGIGSKRR…PDNKWYRLWT (102 aa). A compositionally biased stretch (acidic residues) spans 27–41; the sequence is EEEEEEDDDGEEEYE. The helical transmembrane segment at 103 to 123 threads the bilayer; sequence RFILVWAVYSSFFTPLEFGFF. The Extracellular segment spans residues 124–130; the sequence is RGLPRNL. The helical transmembrane segment at 131-151 threads the bilayer; it reads FFLDIAGQIAFLIDIVLRFFV. At 152–174 the chain is on the cytoplasmic side; sequence AYRDPDTYRMVHNPTSIALRYCK. A helical membrane pass occupies residues 175–195; that stretch reads SSFIFDLLGCFPWDAIYKACG. The Extracellular segment spans residues 196–201; it reads SKEEVR. The chain crosses the membrane as a helical; Voltage-sensor span at residues 202 to 222; sequence YLLWIRLTRAMKVTEFFRSME. Topologically, residues 223 to 236 are cytoplasmic; it reads KDIRINYLFTRIVK. Residues 237–257 form a helical membrane-spanning segment; it reads LIVVELYCTHTAACIFYYLAT. Residues 258–292 are Extracellular-facing; sequence TLPESMEGYTWIGSLQLGDYSYSHFREIDLTKRYM. Residues 293–312 constitute an intramembrane region (pore-forming); that stretch reads TSLYFAIVTMATVGYGDIHA. At 313–316 the chain is on the extracellular side; it reads VNVR. A helical transmembrane segment spans residues 317–337; that stretch reads EMIFIMIYVSFDMILGAYLIG. The Cytoplasmic portion of the chain corresponds to 338–858; that stretch reads NMTALIVKGS…GDDGGTEARQ (521 aa). 419–539 serves as a coordination point for a nucleoside 3',5'-cyclic phosphate; that stretch reads LFKGCSAEFI…RRILSNLSES (121 aa). ANK repeat units follow at residues 559–592, 596–625, 629–658, 660–689, 693–722, and 726–756; these read KQEAELTLRVNNAAFYGDMHQLKSLIRAGADPKN, DGRSPLHLAACKGFEDVVQFLLHEGVDIDL, FGNTPLLEAVKQGHDRVATLLFSKGAKLSL, NAGSHLCTAVARGDTDFVRRALAYGGDPNA, DHRAPLHIAAAEGLYLMAKLLVDAGASVFA, and WGTTPLDEGRRCGSRTMVQLLEAAKSGELSR. The KHA domain maps to 772–858; it reads RCSVFPHHPW…GDDGGTEARQ (87 aa).

Belongs to the potassium channel family. Plant (TC 1.A.1.4) subfamily.

It is found in the membrane. Its function is as follows. Probable outward-rectifying potassium channel. The polypeptide is Potassium channel KOR1 (Oryza sativa subsp. japonica (Rice)).